Reading from the N-terminus, the 921-residue chain is Isoleucine--tRNA ligase (921 aa).

The 'HIGH' region signature appears at Pro-57–His-67. Glu-552 is an L-isoleucyl-5'-AMP binding site. The 'KMSKS' region motif lies at Lys-593–Ser-597. ATP is bound at residue Lys-596. Positions 888, 891, 908, and 911 each coordinate Zn(2+).

Belongs to the class-I aminoacyl-tRNA synthetase family. IleS type 1 subfamily. In terms of assembly, monomer. Zn(2+) serves as cofactor.

The protein resides in the cytoplasm. The catalysed reaction is tRNA(Ile) + L-isoleucine + ATP = L-isoleucyl-tRNA(Ile) + AMP + diphosphate. Functionally, catalyzes the attachment of isoleucine to tRNA(Ile). As IleRS can inadvertently accommodate and process structurally similar amino acids such as valine, to avoid such errors it has two additional distinct tRNA(Ile)-dependent editing activities. One activity is designated as 'pretransfer' editing and involves the hydrolysis of activated Val-AMP. The other activity is designated 'posttransfer' editing and involves deacylation of mischarged Val-tRNA(Ile). This is Isoleucine--tRNA ligase from Listeria monocytogenes serotype 4b (strain F2365).